Here is a 329-residue protein sequence, read N- to C-terminus: Strigolactones hydrolase CXE15 (329 aa).

The short motif at 83-85 is the Involved in the stabilization of the negatively charged intermediate by the formation of the oxyanion hole element; that stretch reads HGG. (-)-2'-epi-GR24-binding residues include G85, G86, S169, and S170. The active-site Nucleophile is the S169. Residues E271 and H302 contribute to the active site.

The protein belongs to the 'GDXG' lipolytic enzyme family. In terms of tissue distribution, expressed in axillary buds, leaves, stems, hypocotyls, flowers, siliques, and vasculatures of shoots and roots.

It localises to the nucleus. Its subcellular location is the cytoplasm. The protein resides in the cytosol. It carries out the reaction (-)-2'-epi-GR24 + H2O = (-)-2'-epi-GR24 ABC-rings + 5-hydroxy-3-methylfuran-2(5H)-one. The enzyme catalyses 5-deoxystrigol + H2O = 5-deoxystrigol ABC-rings + 5-hydroxy-3-methylfuran-2(5H)-one. It catalyses the reaction orobanchol + H2O = orobanchol ABC-rings + 5-hydroxy-3-methylfuran-2(5H)-one. Functionally, binds to strigolactones (SLs) such as (-)-2'-epi-GR24(4DO), 5-deoxystrigol (5DS) and orobanchol, and catalyzes their hydrolysis; SL are phytohormones controlling shoot branching and communications between plants and microorganisms. Promotes shoot branching by dampening SL-inhibited axillary bud outgrowth. The protein is Strigolactones hydrolase CXE15 of Arabidopsis thaliana (Mouse-ear cress).